We begin with the raw amino-acid sequence, 452 residues long: Scaffold protein ILK (452 aa).

Residue Met-1 is modified to N-acetylmethionine. ANK repeat units lie at residues 2-30 (DDIFTQCREGNAVAVRLWLDNTENDLNQG), 31-63 (DDHGFSPLHWACREGRSAVVEMLIMRGARINVM), 64-96 (NRGDDTPLHLAASHGHRDIVQKLLQYKADINAV), 97-129 (NEHGNVPLHYACFWGQDQVAEDLVANGALVSIC), and 130-174 (NKYG…GTTR). Positions 33 to 139 (HGFSPLHWAC…NKYGEMPVDK (107 aa)) are interaction with LIMS1. Thr-173 is modified (phosphothreonine; by PAK1). The tract at residues 180–212 (GTLNKHSGIDFKQLNFLTKLNENHSGELWKGRW) is PH-like; mediates interaction with TGFB1I1. Phosphoserine is present on Ser-186. One can recognise a Protein kinase domain in the interval 193–446 (LNFLTKLNEN…PKFDMIVPIL (254 aa)). Residues Asn-200, Asn-202, His-203, Ser-204, and Lys-220 each coordinate ATP. A Phosphoserine; by PAK1 modification is found at Ser-246. Positions 270, 272, and 279 each coordinate ATP. Position 339 (Asp-339) interacts with Mg(2+). Residue Lys-341 participates in ATP binding. The Nuclear localization signal motif lies at 363 to 371 (KKPEDTNRR). Lys-426 carries the N6-acetyllysine modification.

The protein belongs to the protein kinase superfamily. TKL Ser/Thr protein kinase family. In terms of assembly, component of the heterotrimeric IPP (ILK-PINCH-PARVIN) complex composed of ILK, LIMS1/PINCH and PARVA; the complex binds to F-actin via the C-terminal tail of LIMS1 and the N-terminal region of PARVA, promoting F-actin filament bundling. Formation of the IPP complex is dependent on protein kinase C and precedes integrin-mediated cell adhesion and spreading. ILK also interacts with LIMS2/PINCH2 and with PARVB and PARVG which may substitute for LIMS1 and PARVA in the IPP complex; PARVA and PARVB compete for the same binding site. Interaction with PARVG promotes the establishment of cell polarity required for leukocyte migration. Interacts with the cytoplasmic domain of integrin ITGB1 and may also interact with integrins ITGB2, ITGB3 and/or ITGB5. Interacts probably also with TGFB1I1. Interacts (via ANK repeats) with EPHA1 (via SAM domain); stimulated by EFNA1 but independent of the kinase activity of EPHA1. Interacts with FERMT2. Interacts with LIMD2; leading to activate the protein kinase activity. Interacts with PXN/PAXILLIN (via LD motif 4). Interacts with CCDC25 (via cytoplasmic region); initiating the ILK-PARVB cascade to induce cytoskeleton rearrangement and directional migration of cells. Interacts with IQGAP1; the interaction is required for localization of IQGAP1 to the cell cortex. In terms of processing, phosphorylation by PAK1 modulates ILK subcellular location by promoting its nuclear export. In terms of tissue distribution, highly expressed in heart followed by skeletal muscle, pancreas and kidney. Weakly expressed in placenta, lung and liver.

The protein localises to the cell junction. It localises to the focal adhesion. It is found in the cell membrane. The protein resides in the cell projection. Its subcellular location is the lamellipodium. The protein localises to the cytoplasm. It localises to the myofibril. It is found in the sarcomere. The protein resides in the nucleus. Its subcellular location is the cytoskeleton. The protein localises to the microtubule organizing center. It localises to the centrosome. It is found in the cell cortex. In terms of biological role, scaffold protein which mediates protein-protein interactions during a range of cellular events including focal adhesion assembly, cell adhesion and cell migration. Regulates integrin-mediated signal transduction by contributing to inside-out integrin activation. Recruits PARVA and LIMS1/PITCH to form the heterotrimeric IPP (ILK-PINCH-PARVIN) complex which binds to F-actin via the C-terminal tail of LIMS1 and the N-terminal region of PARVA, promoting F-actin filament bundling, a process required to generate force for actin cytoskeleton reorganization and subsequent dynamic cell adhesion events such as cell spreading and migration. Binding to PARVA promotes effective assembly of ILK into focal adhesions while PARVA-bound ILK can simultaneously engage integrin-beta cytoplasmic tails to mediate cell adhesion. Plays a role with PARVG in promoting the cell adhesion and spreading of leukocytes. Acts as an upstream effector of both AKT1/PKB and GSK3. Mediates trafficking of caveolae to the cell surface in an ITGB1-dependent manner by promoting the recruitment of IQGAP1 to the cell cortex which cooperates with its effector DIAPH1 to locally stabilize microtubules and allow stable insertion of caveolae into the plasma membrane. Required for the maintenance of mitotic spindle integrity by promoting phosphorylation of TACC3 by AURKA. Associates with chromatin and may act as a negative regulator of transcription when located in the nucleus. This is Scaffold protein ILK from Homo sapiens (Human).